A 288-amino-acid polypeptide reads, in one-letter code: Urease accessory protein UreD 1 (288 aa).

Pro residues predominate over residues 1–10; it reads MHGPLAPAPS. Residues 1–35 form a disordered region; sequence MHGPLAPAPSPERLGAAPARQRSDGRIRLRVGPAR.

This sequence belongs to the UreD family. UreD, UreF and UreG form a complex that acts as a GTP-hydrolysis-dependent molecular chaperone, activating the urease apoprotein by helping to assemble the nickel containing metallocenter of UreC. The UreE protein probably delivers the nickel.

The protein localises to the cytoplasm. Its function is as follows. Required for maturation of urease via the functional incorporation of the urease nickel metallocenter. This is Urease accessory protein UreD 1 from Methylobacterium radiotolerans (strain ATCC 27329 / DSM 1819 / JCM 2831 / NBRC 15690 / NCIMB 10815 / 0-1).